We begin with the raw amino-acid sequence, 267 residues long: Trehalose-phosphate phosphatase (267 aa).

The active-site Nucleophile is the D20. D20, D22, and D198 together coordinate Mg(2+). 20–22 (DLD) contacts substrate.

Belongs to the trehalose phosphatase family. Mg(2+) serves as cofactor.

It catalyses the reaction alpha,alpha-trehalose 6-phosphate + H2O = alpha,alpha-trehalose + phosphate. It participates in glycan biosynthesis; trehalose biosynthesis. In terms of biological role, removes the phosphate from trehalose 6-phosphate to produce free trehalose. In Salmonella typhimurium (strain SL1344), this protein is Trehalose-phosphate phosphatase (otsB).